The following is a 485-amino-acid chain: ATP synthase subunit beta 2 (485 aa).

Over residues 1–10 (MSGMGEKSEQ) the composition is skewed to basic and acidic residues. Positions 1–27 (MSGMGEKSEQISKSARSTDPQEQESVA) are disordered. Over residues 11–24 (ISKSARSTDPQEQE) the composition is skewed to polar residues. 177 to 184 (GGAGVGKT) is an ATP binding site.

The protein belongs to the ATPase alpha/beta chains family. In terms of assembly, F-type ATPases have 2 components, CF(1) - the catalytic core - and CF(0) - the membrane proton channel. CF(1) has five subunits: alpha(3), beta(3), gamma(1), delta(1), epsilon(1). CF(0) has three main subunits: a(1), b(2) and c(9-12). The alpha and beta chains form an alternating ring which encloses part of the gamma chain. CF(1) is attached to CF(0) by a central stalk formed by the gamma and epsilon chains, while a peripheral stalk is formed by the delta and b chains.

It is found in the cell inner membrane. It carries out the reaction ATP + H2O + 4 H(+)(in) = ADP + phosphate + 5 H(+)(out). Its function is as follows. Produces ATP from ADP in the presence of a proton gradient across the membrane. The catalytic sites are hosted primarily by the beta subunits. This is ATP synthase subunit beta 2 from Nitrosomonas eutropha (strain DSM 101675 / C91 / Nm57).